The primary structure comprises 1905 residues: Bromodomain adjacent to zinc finger domain protein 2A (1905 aa).

2 disordered regions span residues 1–59 and 362–434; these read MEME…NGLS and TSIF…PTTS. 3 stretches are compositionally biased toward polar residues: residues 35–59, 379–391, and 399–420; these read TNGS…NGLS, LQDN…NGSD, and TQSS…STIQ. The residue at position 507 (Thr507) is a Phosphothreonine. A Phosphoserine modification is found at Ser509. The 72-residue stretch at 546-617 folds into the MBD domain; sequence IATPEEVRLP…EHFSFSPRMP (72 aa). Residue Thr548 is modified to Phosphothreonine. Phosphoserine is present on Ser613. The segment at 648-792 is disordered; sequence ITGKRGRPRN…KEKEEVTKAK (145 aa). 2 consecutive DNA-binding regions (a.T hook) follow at residues 649–661 and 670–682; these read TGKR…TEKA and KRGR…VKIT. Residues 656–668 show a composition bias toward basic and acidic residues; the sequence is RNTEKAKTKEVPK. Residues 669 to 678 are compositionally biased toward basic residues; it reads VKRGRGRPPK. Lys680 bears the N6-acetyllysine; by KAT8 mark. Residues 686–709 are compositionally biased toward basic and acidic residues; that stretch reads NKTDNRPLKKLEAQETLNEEDKAK. Residues 693–792 are a coiled coil; the sequence is LKKLEAQETL…KEKEEVTKAK (100 aa). A compositionally biased stretch (basic residues) spans 710 to 721; it reads IAKSKKKMRQKV. The span at 725 to 734 shows a compositional bias: polar residues; it reads ECQTTIQGQA. Basic and acidic residues-rich tracts occupy residues 739-748 and 756-792; these read KQETKSLKQK and AEKE…TKAK. An N6-acetyllysine modification is found at Lys799. The region spanning 848 to 913 is the DDT domain; sequence SGAFSDCLTI…LKAALHDPGF (66 aa). Lys866 is covalently cross-linked (Glycyl lysine isopeptide (Lys-Gly) (interchain with G-Cter in SUMO2)). Ser1051 is modified (phosphoserine). Glycyl lysine isopeptide (Lys-Gly) (interchain with G-Cter in SUMO2) cross-links involve residues Lys1150 and Lys1172. Disordered regions lie at residues 1178–1220, 1283–1318, and 1330–1412; these read SNTT…PQAQ, LSSS…SSPD, and MPCN…RPPS. The residue at position 1184 (Ser1184) is a Phosphoserine. The a.T hook 3 DNA-binding region spans 1186 to 1198; the sequence is ARARGRPRKTKPG. A compositionally biased stretch (low complexity) spans 1283-1293; it reads LSSSVLTPDSS. Acidic residues predominate over residues 1306–1315; it reads EEPEPDEAES. Over residues 1345–1359 the composition is skewed to polar residues; it reads DQPTPSPQQLASSKP. Position 1397 is a phosphoserine (Ser1397). Residues 1404 to 1416 constitute a DNA-binding region (a.T hook 4); that stretch reads PKRRGRPPSKFFK. Ser1559 is modified (phosphoserine). Glycyl lysine isopeptide (Lys-Gly) (interchain with G-Cter in SUMO2) cross-links involve residues Lys1676 and Lys1709. The segment at 1676 to 1726 adopts a PHD-type zinc-finger fold; the sequence is KVTCLVCRKGDNDEFLLLCDGCDRGCHIYCHRPKMEAVPEGDWFCTVCLAQ. Disordered regions lie at residues 1734 to 1755 and 1769 to 1789; these read QKPG…NFSE and ESPA…KRRR. 4 positions are modified to phosphoserine: Ser1747, Ser1770, Ser1783, and Ser1785. Positions 1793–1897 constitute a Bromo domain; the sequence is RNHHSDLTFC…RFFESRWEEF (105 aa).

Belongs to the WAL family. In terms of assembly, component of the NoRC-1 ISWI chromatin remodeling complex at least composed of SMARCA1 and BAZ2A/TIP5, which regulates the spacing of histone octamers on the DNA template to facilitate access to DNA. Within the NoRC-1 ISWI chromatin remodeling complex interacts with SMARCA1; the interaction is direct. Component of the NoRC-5 ISWI chromatin remodeling complex (also called the NoRC nucleolar-remodeling complex), at least composed of SMARCA5/SNF2H and BAZ2A/TIP5, which regulates the spacing of histone octamers on the DNA template to facilitate access to DNA. Within the NoRC-5 ISWI chromatin remodeling complexes interacts with SMARCA5/SNF2H; the interaction is direct. Interacts with TTF1; the interaction is required for recruitment of the NoRC-5 ISWI chromatin remodeling complex to rDNA. Interacts with HDAC1. Interacts with SIN3A. Interacts with DNMT1 and DNM3B. Interacts with BEND3 and USP21. Acetylation at Lys-680 by KAT8/MOF promotes its dissociation from pRNA, affecting heterochromatin formation, nucleosome positioning and rDNA silencing. Deacetylation by SIRT1 in late S phase enhances pRNA-binding, allowing de novo DNA methylation and heterochromatin formation. Acetylation is high during S phase and declines to background levels in late S phase when the silent copies of rRNA genes are replicated. Post-translationally, ubiquitinated. Deubiquitinated by USP21 leading to its stabilization. In terms of tissue distribution, expressed at moderate levels in most tissues analyzed, including heart, brain, placenta, lung, skeletal muscle, kidney and pancreas.

Its subcellular location is the nucleus. The protein localises to the nucleolus. Its function is as follows. Regulatory subunit of the ATP-dependent NoRC-1 and NoRC-5 ISWI chromatin remodeling complexes, which form ordered nucleosome arrays on chromatin and facilitate access to DNA during DNA-templated processes such as DNA replication, transcription, and repair. Both complexes regulate the spacing of nucleosomes along the chromatin and have the ability to slide mononucleosomes to the center of a DNA template. Directly stimulates the ATPase activity of SMARCA5 in the NoRC-5 ISWI chromatin remodeling complex. The NoRC-1 ISWI chromatin remodeling complex has a lower ATP hydrolysis rate than the NoRC-5 ISWI chromatin remodeling complex. Within the NoRC-5 ISWI chromatin remodeling complex, mediates silencing of a fraction of rDNA by recruiting histone-modifying enzymes and DNA methyltransferases, leading to heterochromatin formation and transcriptional silencing. In the complex, it plays a central role by being recruited to rDNA and by targeting chromatin modifying enzymes such as HDAC1, leading to repress RNA polymerase I transcription. Recruited to rDNA via its interaction with TTF1 and its ability to recognize and bind histone H4 acetylated on 'Lys-16' (H4K16ac), leading to deacetylation of H4K5ac, H4K8ac, H4K12ac but not H4K16ac. Specifically binds pRNAs, 150-250 nucleotide RNAs that are complementary in sequence to the rDNA promoter; pRNA-binding is required for heterochromatin formation and rDNA silencing. In Homo sapiens (Human), this protein is Bromodomain adjacent to zinc finger domain protein 2A (BAZ2A).